Here is a 431-residue protein sequence, read N- to C-terminus: Histidinol dehydrogenase (431 aa).

Y127, Q185, and N208 together coordinate NAD(+). The substrate site is built by S234, Q256, and H259. Q256 and H259 together coordinate Zn(2+). Residues E323 and H324 each act as proton acceptor in the active site. Residues H324, D357, E411, and H416 each contribute to the substrate site. Residue D357 participates in Zn(2+) binding. H416 serves as a coordination point for Zn(2+).

This sequence belongs to the histidinol dehydrogenase family. Zn(2+) serves as cofactor.

It carries out the reaction L-histidinol + 2 NAD(+) + H2O = L-histidine + 2 NADH + 3 H(+). Its pathway is amino-acid biosynthesis; L-histidine biosynthesis; L-histidine from 5-phospho-alpha-D-ribose 1-diphosphate: step 9/9. In terms of biological role, catalyzes the sequential NAD-dependent oxidations of L-histidinol to L-histidinaldehyde and then to L-histidine. The chain is Histidinol dehydrogenase from Vibrio vulnificus (strain YJ016).